The chain runs to 302 residues: tRNA pseudouridine synthase B (302 aa).

Catalysis depends on Asp-45, which acts as the Nucleophile.

Belongs to the pseudouridine synthase TruB family. Type 1 subfamily.

It catalyses the reaction uridine(55) in tRNA = pseudouridine(55) in tRNA. Functionally, responsible for synthesis of pseudouridine from uracil-55 in the psi GC loop of transfer RNAs. In Francisella philomiragia subsp. philomiragia (strain ATCC 25017 / CCUG 19701 / FSC 153 / O#319-036), this protein is tRNA pseudouridine synthase B.